Reading from the N-terminus, the 501-residue chain is TNF receptor-associated factor 2 (501 aa).

The residue at position 2 (Ala2) is an N-acetylalanine. Residue Ser5 is modified to Phosphoserine. Thr7 is modified (phosphothreonine). A Phosphoserine modification is found at Ser11. At Thr22 the chain carries Phosphothreonine. Lys31 is covalently cross-linked (Glycyl lysine isopeptide (Lys-Gly) (interchain with G-Cter in ubiquitin)). An RING-type zinc finger spans residues 34-73 (CSACRNVLRRPFQAQCGHRYCSFCLASILSSGPQNCAACV). A Phosphothreonine; by PKC modification is found at Thr117. 2 TRAF-type zinc fingers span residues 124-180 (CHEG…AHHE) and 177-233 (AHHE…EKQQ). The interval 283–293 (ENIVCVLNREV) is important for interaction with BIRC2 and BIRC3. The stretch at 299-348 (TAEACSRQHRLDQDKIEALSSKVQQLERSIGLKDLAMADLEQKVLEMEAS) forms a coiled coil. A Glycyl lysine isopeptide (Lys-Gly) (interchain with G-Cter in ubiquitin) cross-link involves residue Lys320. Residues 351–496 (DGVFIWKISD…DDAIFIKAIV (146 aa)) form the MATH domain.

This sequence belongs to the TNF receptor-associated factor family. A subfamily. Homotrimer. Heterotrimer with TRAF1. Heterotrimer with TRAF3 (via TRAF domain). The domain containing the RING-type and the first TRAF-type zinc finger can also form homodimers (in vitro). Interacts with TNFRSF1B/TNFR2. Interacts with TNFRSF5/CD40. Interacts with TNFRSF4, TNFRSF7/CD27, TNFRSF8/CD30, TNFRSF9/CD137, TNFRSF11A/RANK, TNFRSF13B/TACI, TNFRSF14, TNFRSF16/NGFR, TNFRSF17/BCMA, TNFRSF18/AITR, TNFRSF19/TROY, TNFRSF19L/RELT and EDAR. Stimulation of TNF-alpha receptor TNFRSF1A leads to the formation of two distinct signaling complexes. Plasma membrane-bound complex I is composed of TNFRSF1A, TRADD, RIPK1, TRAF2 and BIRC2/c-IAP1 or BIRC3 which interacts with CHUCK/IKK-alpha, IKBKB/IKK-beta and IKBKG/IKK-gamma promoting cell survival. Subsequently, TRADD, RIPK1 and TRAF2 dissociate from TNFRSF1A and form cytoplasmic complex II with FADD and caspase CASP8 promoting cell apoptosis. Interacts with TRADD. Identified in a complex with TNFRSF1A, RIPK1 and IKBKB/IKK-beta. Interacts with RIPK2. Interacts with BIRC2 and BIRC3 N-terminus; a single BIRC2 or BIRC3 molecule interacts with a heterotrimer formed by TRAF1 and TRAF2, or a TRAF2 homotrimer. Identified in a complex composed of TRAF2, TRAF3, BIRC2 and BIRC3. Interacts with BIRC2; the interaction promotes BIRC2 stability. Interaction with BIRC2 and/or BIRC3 is essential for ubiquitination of IKBKE, degradation of NFKBIA and activation of NF-kappa-B. Within complex I, phosphorylated TRAF2 interacts (via 'Lys-63'-linked polyubiquitin chains) with CHUCK/IKK-alpha, IKBKB/IKK-beta, IKBKG/IKK-gamma TAB2, TAB3 and TAK1 in response to TNF-alpha stimulation. Within complex I, interacts with UXT isoform 1 (via TPQE motif); the interaction prevents the recruitment of FADD and CASP8/caspase 8 to complex I. Forms a complex composed of TNFRSF8/CD30 or TNFRSF1B/TNFR2, and TRAF1, TRAF2 and E3 ligase TRAIP. Within the complex, interacts with TRAIP; the interaction inhibits TRAF2-mediated NF-kappa B activation. Component of a complex composed of TANK and TBK1. Interacts with TRPC4AP. Interacts with MAP3K1/MEKK1, MAP3K5/ASK1 and MAP3K11/MLK3 in response to TNF-alpha stimulation; the interaction leads to JNK activation and interaction with MAP3K5 is inhibited by PRMT1. Component of a complex composed of MAP3K14/NIK BIRC3 and TRAF3; the interaction leads to BIRC2/3-mediated ubiquitination of TRAF3 upon CD40 engagement in a TRAF2-dependent manner. Interacts with MAP3K14/NIK in response to TNF-alpha stimulation; the interaction leads to NF-kappa B activation. Interacts with PEG3; the interaction may promote TRAF2-mediated NF-kappa B activation. Interacts with HIVEP3; the interaction may inhibit TNF-alpha-TRAF2-mediated NF-kappa B and JNK activation. Interacts with TANK/ITRAF; the interaction prevents interaction between TNFRSF1B/TNFR2 and TRAF2. Interacts with deubiquitinating enzyme CYLD; the interaction results in the deubiquitination and inactivation of TRAF2. Interacts with SIAH2; the interaction leads to TRAF2 ubiquitination and degradation. Interacts with E2 conjugating enzyme UBE2N/Ubc13, E3 ligase ITCH and RNF11 in response to TNF-alpha stimulation. Interacts with ubiquitin-editing enzyme TNFAIP3/A20 in response to TNF-alpha stimulation; the interaction promotes TRAF2 dissociation from UBE2N/Ubc13, ITCH, RNF11 and TAX1BP1 and prevents prolonged TRAF-2 ubiquitination. Interacts with TAX1BP1 in response to TNF-alpha stimulation; the interaction promotes TRAF2 dissociation from UBE2N/Ubc13 and TNFAIP3/A20, and prevents prolonged TRAF-2 ubiquitination. Interacts (via C-terminus) with EIF2AK2/PKR (via the kinase catalytic domain). Interacts with deubiquitinating enzyme USP48. Interacts with PTPN2; probably involved in TNF-mediated signaling. Interacts with Toll-like receptor TLR4/3 adapter TICAM1/TRIF; the interaction may promote TICAM1 ubiquitination. Interacts with kinase/endoribonuclease ERN1/IRE1 and DAB2IP in response to ER stress; the interaction requires DAB2IP. Interacts with ERN1/IRE1 and TAOK3 in response to ER stress; the interaction may promote TRAF2 phosphorylation. Interacts (via zinc fingers) with DAB2IP (via C-terminus PER domain)in response to TNF-alpha stimulation. Interacts with CASP8AP2/FLASH. Interacts with NFATC2IP; the interaction may repress IL-4 production in T cells. Interacts with kinase CDK9. Interacts with sphingosine kinase 1 SPHK1. Interacts with kinase TNIK. Interacts with TRAFD1. Interacts with DNA phosphodiesterase TDP2. Interacts with MAVS/IPS1. Interacts with CARD14. Interacts with Epstein-Barr virus LMP1/BNFL1. Interacts with GPS2. Interacts with XPNPEP3. Interacts with RIPK3. Interacts with RELL2. Interacts with LRRC19. Interacts with GAPDH; promoting TRAF2 ubiquitination. In terms of processing, phosphorylated at several serine residues within the first 128 amino acid residues. Phosphorylated at Thr-117 in response to signaling via TNF and TNFRSF1A. Phosphorylation at Thr-117 is required for 'Lys-63'-linked polyubiquitination, but not for 'Lys-48'-linked polyubiquitination. Phosphorylation at Thr-117 is important for interaction with IKKA and IKKB, activation of IKK and subsequent activation of NF-kappa-B. Post-translationally, undergoes both 'Lys-48'-linked and 'Lys-63'-linked polyubiquitination. Polyubiquitinated via 'Lys-63'-linked ubiquitin in response to TNF signaling; this requires prior phosphorylation at Thr-117. 'Lys-63'-linked polyubiquitination promotes TRAF2-mediated activation of NF-kappa-B. Can be polyubiquitinated at several Lys residues via 'Lys-48'-linked ubiquitin chains in response to TNF signaling, leading to proteasomal degradation. Autoubiquitinated, leading to its subsequent proteasomal degradation. Polyubiquitinated by BIRC2 and SIAH2, leading to its subsequent proteasomal degradation. Deubiquitinated by CYLD, a protease that specifically cleaves 'Lys-63'-linked polyubiquitin chains. Ubiquination is inhibited by LRRC19; inhibits proteasomal degradation. Ubiquitinated at Lys-320 by the SCF(FBXL2) complex, leading to its degradation by the proteasome. Ubiquitinated by E3 ubiquitin-protein ligase complex containing FBXO7; leading to repression of NF-kappa-B signaling.

It is found in the cytoplasm. It catalyses the reaction S-ubiquitinyl-[E2 ubiquitin-conjugating enzyme]-L-cysteine + [acceptor protein]-L-lysine = [E2 ubiquitin-conjugating enzyme]-L-cysteine + N(6)-ubiquitinyl-[acceptor protein]-L-lysine.. The protein operates within protein modification; protein ubiquitination. Its activity is regulated as follows. Has very low E3 ubiquitin ligase activity in the absence of sphingosine-1-phosphate. E3 ubiquitin ligase activity is strongly activated by cytoplasmic sphingosine-1-phosphate. Functionally, E3 ubiquitin-protein ligase that regulates activation of NF-kappa-B and JNK and plays a central role in the regulation of cell survival and apoptosis. Catalyzes 'Lys-63'-linked ubiquitination of target proteins, such as BIRC3, IKBKE, MLST8, RIPK1 and TICAM1. Is an essential constituent of several E3 ubiquitin-protein ligase complexes, where it promotes the ubiquitination of target proteins by bringing them into contact with other E3 ubiquitin ligases. Regulates BIRC2 and BIRC3 protein levels by inhibiting their autoubiquitination and subsequent degradation; this does not depend on the TRAF2 RING-type zinc finger domain. Plays a role in mediating activation of NF-kappa-B by EIF2AK2/PKR. In complex with BIRC2 or BIRC3, promotes ubiquitination of IKBKE. Acts as a regulator of mTORC1 and mTORC2 assembly by mediating 'Lys-63'-linked ubiquitination of MLST8, thereby inhibiting formation of the mTORC2 complex, while facilitating assembly of the mTORC1 complex. Required for normal antibody isotype switching from IgM to IgG. This is TNF receptor-associated factor 2 from Homo sapiens (Human).